A 221-amino-acid chain; its full sequence is Urease accessory protein UreF (221 aa).

Belongs to the UreF family. In terms of assembly, ureD, UreF and UreG form a complex that acts as a GTP-hydrolysis-dependent molecular chaperone, activating the urease apoprotein by helping to assemble the nickel containing metallocenter of UreC. The UreE protein probably delivers the nickel.

The protein localises to the cytoplasm. In terms of biological role, required for maturation of urease via the functional incorporation of the urease nickel metallocenter. The protein is Urease accessory protein UreF of Aliivibrio fischeri (strain ATCC 700601 / ES114) (Vibrio fischeri).